The primary structure comprises 864 residues: Translation initiation factor IF-2 (864 aa).

The span at 140–171 (DSRSLNTKKENKLKISNKDEQNKKFNQHRESN) shows a compositional bias: basic and acidic residues. Positions 140 to 179 (DSRSLNTKKENKLKISNKDEQNKKFNQHRESNSFDLNHKK) are disordered. The tr-type G domain occupies 364–533 (IRAPVVTIMG…LLQAEMLELK (170 aa)). The tract at residues 373–380 (GHVDHGKT) is G1. 373 to 380 (GHVDHGKT) is a binding site for GTP. Residues 398–402 (GITQN) form a G2 region. The segment at 419 to 422 (DTPG) is G3. Residues 419 to 423 (DTPGH) and 473 to 476 (NKID) contribute to the GTP site. The interval 473–476 (NKID) is G4. Residues 509–511 (SAK) are G5.

It belongs to the TRAFAC class translation factor GTPase superfamily. Classic translation factor GTPase family. IF-2 subfamily.

The protein resides in the cytoplasm. One of the essential components for the initiation of protein synthesis. Protects formylmethionyl-tRNA from spontaneous hydrolysis and promotes its binding to the 30S ribosomal subunits. Also involved in the hydrolysis of GTP during the formation of the 70S ribosomal complex. The polypeptide is Translation initiation factor IF-2 (Buchnera aphidicola subsp. Acyrthosiphon pisum (strain Tuc7)).